Reading from the N-terminus, the 123-residue chain is Large ribosomal subunit protein uL14 (123 aa).

The protein belongs to the universal ribosomal protein uL14 family. As to quaternary structure, part of the 50S ribosomal subunit. Forms a cluster with proteins L3 and L19. In the 70S ribosome, L14 and L19 interact and together make contacts with the 16S rRNA in bridges B5 and B8.

In terms of biological role, binds to 23S rRNA. Forms part of two intersubunit bridges in the 70S ribosome. In Escherichia coli O6:K15:H31 (strain 536 / UPEC), this protein is Large ribosomal subunit protein uL14.